A 331-amino-acid chain; its full sequence is Phosphate acyltransferase (331 aa).

This sequence belongs to the PlsX family. As to quaternary structure, homodimer. Probably interacts with PlsY.

Its subcellular location is the cytoplasm. The catalysed reaction is a fatty acyl-[ACP] + phosphate = an acyl phosphate + holo-[ACP]. Its pathway is lipid metabolism; phospholipid metabolism. In terms of biological role, catalyzes the reversible formation of acyl-phosphate (acyl-PO(4)) from acyl-[acyl-carrier-protein] (acyl-ACP). This enzyme utilizes acyl-ACP as fatty acyl donor, but not acyl-CoA. This is Phosphate acyltransferase from Chlorobaculum tepidum (strain ATCC 49652 / DSM 12025 / NBRC 103806 / TLS) (Chlorobium tepidum).